We begin with the raw amino-acid sequence, 287 residues long: Mitochondrial glycine transporter B (287 aa).

Solcar repeat units follow at residues 7–97, 104–188, and 198–282; these read HPAL…LKQH, PSAG…AKKA, and IAPL…LMAR. The next 6 helical transmembrane spans lie at 13–38, 72–98, 110–135, 163–186, 202–228, and 257–275; these read FMCG…TRLQ, GVSP…KQHY, VLLG…TRFE, GLTA…SQAK, VNFG…KTHM, and GAVP…AWTV.

Belongs to the mitochondrial carrier (TC 2.A.29) family. SLC25A38 subfamily. At 24 hours post-fertilization, expressed predominantly in posterior blood island, posterior cardinal vein and circulating blood. At 34 hours post-fertilization, becomes restricted to posterior blood island and circulating blood.

It is found in the mitochondrion inner membrane. The enzyme catalyses glycine(in) = glycine(out). Functionally, mitochondrial glycine transporter that imports glycine into the mitochondrial matrix. Plays an important role in providing glycine for the first enzymatic step in heme biosynthesis, the condensation of glycine with succinyl-CoA to produce 5-aminolevulinate (ALA) in the mitochondrial matrix. Required during erythropoiesis. May play a role as pro-apoptotic protein that induces caspase-dependent apoptosis. This Danio rerio (Zebrafish) protein is Mitochondrial glycine transporter B (slc25a38b).